The sequence spans 148 residues: Aspartate carbamoyltransferase regulatory chain (148 aa).

The Zn(2+) site is built by C106, C111, C134, and C137.

This sequence belongs to the PyrI family. Contains catalytic and regulatory chains. Zn(2+) is required as a cofactor.

Its function is as follows. Involved in allosteric regulation of aspartate carbamoyltransferase. The sequence is that of Aspartate carbamoyltransferase regulatory chain from Methanococcus maripaludis (strain DSM 14266 / JCM 13030 / NBRC 101832 / S2 / LL).